We begin with the raw amino-acid sequence, 289 residues long: Oxaloacetate decarboxylase (289 aa).

Residue serine 50 coordinates substrate. Position 88 (aspartate 88) interacts with Mg(2+). Residues arginine 159 and histidine 235 each coordinate substrate.

It belongs to the isocitrate lyase/PEP mutase superfamily. Oxaloacetate decarboxylase family. As to quaternary structure, homotetramer; dimer of dimers. The cofactor is Mg(2+).

The enzyme catalyses oxaloacetate + H(+) = pyruvate + CO2. In terms of biological role, catalyzes the decarboxylation of oxaloacetate into pyruvate. Seems to play a role in maintaining cellular concentrations of bicarbonate and pyruvate. This chain is Oxaloacetate decarboxylase, found in Pseudomonas entomophila (strain L48).